A 155-amino-acid polypeptide reads, in one-letter code: Ribosomal RNA large subunit methyltransferase H (155 aa).

Residues L72, G103, and 122–127 (LSPLTL) each bind S-adenosyl-L-methionine.

It belongs to the RNA methyltransferase RlmH family. Homodimer.

It is found in the cytoplasm. It carries out the reaction pseudouridine(1915) in 23S rRNA + S-adenosyl-L-methionine = N(3)-methylpseudouridine(1915) in 23S rRNA + S-adenosyl-L-homocysteine + H(+). Its function is as follows. Specifically methylates the pseudouridine at position 1915 (m3Psi1915) in 23S rRNA. The polypeptide is Ribosomal RNA large subunit methyltransferase H (Haemophilus influenzae (strain PittGG)).